Reading from the N-terminus, the 429-residue chain is Adenylosuccinate synthetase (429 aa).

GTP is bound by residues 12–18 (GDEGKGK) and 40–42 (GHT). Asp-13 serves as the catalytic Proton acceptor. Residues Asp-13 and Gly-40 each coordinate Mg(2+). IMP-binding positions include 13–16 (DEGK), 38–41 (NAGH), Thr-129, Arg-143, Gln-224, Thr-239, and Arg-303. His-41 serves as the catalytic Proton donor. Residue 299–305 (VTTGRAR) coordinates substrate. GTP-binding positions include Arg-305, 331 to 333 (KLD), and 413 to 415 (GVG).

It belongs to the adenylosuccinate synthetase family. In terms of assembly, homodimer. Mg(2+) is required as a cofactor.

It localises to the cytoplasm. The catalysed reaction is IMP + L-aspartate + GTP = N(6)-(1,2-dicarboxyethyl)-AMP + GDP + phosphate + 2 H(+). It functions in the pathway purine metabolism; AMP biosynthesis via de novo pathway; AMP from IMP: step 1/2. Functionally, plays an important role in the de novo pathway of purine nucleotide biosynthesis. Catalyzes the first committed step in the biosynthesis of AMP from IMP. This chain is Adenylosuccinate synthetase, found in Rhodococcus erythropolis (strain PR4 / NBRC 100887).